We begin with the raw amino-acid sequence, 107 residues long: HTH-type transcriptional regulator Rv2034 (107 aa).

Residues 1 to 93 (MSTYRSPDRA…DLDRFWTRAL (93 aa)) enclose the HTH arsR-type domain. Residues 33–56 (VGELARDLPVSRPAVSQHLKVLKT) constitute a DNA-binding region (H-T-H motif).

In terms of assembly, homodimer.

With respect to regulation, DNA-binding ability is not susceptible to zinc, nickel, cobalt, cadmium, lead, copper and manganese ions. Its function is as follows. Involved in the regulation of lipid metabolism and hypoxic response. Positively regulates transcription of various genes, such as phoP, groEL2 and dosR. Negatively regulates its own transcription. Acts by binding to a specific palindromic sequence motif in promoter regions. The polypeptide is HTH-type transcriptional regulator Rv2034 (Mycobacterium tuberculosis (strain ATCC 25618 / H37Rv)).